We begin with the raw amino-acid sequence, 157 residues long: Siroheme decarboxylase NirG subunit (157 aa).

It belongs to the Ahb/Nir family. Forms a complex composed of NirDL, NirG and NirH. All proteins are required for the total conversion of siroheme to didecarboxysiroheme.

The catalysed reaction is siroheme + 2 H(+) = 12,18-didecarboxysiroheme + 2 CO2. Its pathway is porphyrin-containing compound metabolism. Functionally, involved in heme d1 biosynthesis. Catalyzes the decarboxylation of siroheme into didecarboxysiroheme. Siroheme is probably decarboxylated to monodecarboxysiroheme, which is in turn decarboxylated to didecarboxysiroheme. This Paracoccus pantotrophus (Thiosphaera pantotropha) protein is Siroheme decarboxylase NirG subunit.